A 610-amino-acid chain; its full sequence is DEAD-box ATP-dependent RNA helicase 9, mitochondrial (610 aa).

The N-terminal 66 residues, 1–66 (MISTVLRRSI…SSPFGVKVRD (66 aa)), are a transit peptide targeting the mitochondrion. The short motif at 116 to 144 (LAIADLGISPEIVKALKGRGIEKLFPIQK) is the Q motif element. The region spanning 147-321 (LEPAMEGRDM…KKYLNNPLTI (175 aa)) is the Helicase ATP-binding domain. Residue 160–167 (ARTGTGKT) participates in ATP binding. A DEAD box motif is present at residues 269-272 (DEAD). A Helicase C-terminal domain is found at 350-494 (IIGPLVKEHG…ELPSIAVERG (145 aa)). Over residues 542–557 (SGRSGGGGGSYGGSGG) the composition is skewed to gly residues. The interval 542–610 (SGRSGGGGGS…FGSNDGKRSY (69 aa)) is disordered. A compositionally biased stretch (low complexity) spans 558-572 (SSSRYSGGSDRSSGF). Residues 573 to 585 (GSFGSGGSSGGFG) are compositionally biased toward gly residues. Residues 586–596 (SDRSSQSSGRS) show a composition bias toward low complexity.

It belongs to the DEAD box helicase family. DDX21/DDX50 subfamily.

The protein localises to the mitochondrion. The enzyme catalyses ATP + H2O = ADP + phosphate + H(+). The sequence is that of DEAD-box ATP-dependent RNA helicase 9, mitochondrial (RH9) from Arabidopsis thaliana (Mouse-ear cress).